A 58-amino-acid chain; its full sequence is MRMTRVRSLCLAYARCVRLGVFRCISLRGWAPYRAVETVLVQSALTSVERLHEMFRVY.

This is an uncharacterized protein from Treponema pallidum (strain Nichols).